A 154-amino-acid chain; its full sequence is Large ribosomal subunit protein uL15 (154 aa).

A disordered region spans residues 17 to 44 (KRVGRGIGSGTGKTGGRGVKGQRSRSGV). The span at 21–35 (RGIGSGTGKTGGRGV) shows a compositional bias: gly residues.

This sequence belongs to the universal ribosomal protein uL15 family. As to quaternary structure, part of the 50S ribosomal subunit.

Functionally, binds to the 23S rRNA. The sequence is that of Large ribosomal subunit protein uL15 from Bartonella henselae (strain ATCC 49882 / DSM 28221 / CCUG 30454 / Houston 1) (Rochalimaea henselae).